Consider the following 178-residue polypeptide: uncharacterized protein (178 aa).

The segment at 1 to 89 is disordered; it reads MSAKEGSSHP…GEKKGKTEKL (89 aa). 2 stretches are compositionally biased toward basic and acidic residues: residues 44 to 53 and 61 to 89; these read PYQKNEKVVV and AFLH…TEKL.

This is an uncharacterized protein from Schizosaccharomyces pombe (strain 972 / ATCC 24843) (Fission yeast).